The chain runs to 217 residues: Adapter protein MecA (217 aa).

This sequence belongs to the MecA family. Homodimer.

Functionally, enables the recognition and targeting of unfolded and aggregated proteins to the ClpC protease or to other proteins involved in proteolysis. Acts negatively in the development of competence by binding ComK and recruiting it to the ClpCP protease. When overexpressed, inhibits sporulation. Also involved in Spx degradation by ClpC. The chain is Adapter protein MecA from Alkalihalophilus pseudofirmus (strain ATCC BAA-2126 / JCM 17055 / OF4) (Bacillus pseudofirmus).